A 191-amino-acid chain; its full sequence is Large ribosomal subunit protein bL9 (191 aa).

It belongs to the bacterial ribosomal protein bL9 family.

Its function is as follows. Binds to the 23S rRNA. This Granulibacter bethesdensis (strain ATCC BAA-1260 / CGDNIH1) protein is Large ribosomal subunit protein bL9.